A 189-amino-acid chain; its full sequence is Ion-translocating oxidoreductase complex subunit B (189 aa).

The segment at 1-26 is hydrophobic; that stretch reads MSQVIIAIILLGLLALAFGALLGYAA. The 4Fe-4S domain occupies 32–90; that stretch reads EGDPIIDQAEALLPQTQCGQCGYPGCRPYAEAIANGEKINKCPPGGTATMEKLAELMGV. Residues Cys-49, Cys-52, Cys-57, Cys-73, Cys-114, Cys-117, Cys-120, Cys-124, Cys-144, Cys-147, Cys-150, and Cys-154 each contribute to the [4Fe-4S] cluster site. 4Fe-4S ferredoxin-type domains follow at residues 105–134 and 135–164; these read KVAF…GTGK and QMHT…MIPV.

It belongs to the 4Fe4S bacterial-type ferredoxin family. RnfB subfamily. The complex is composed of six subunits: RnfA, RnfB, RnfC, RnfD, RnfE and RnfG. [4Fe-4S] cluster is required as a cofactor.

It is found in the cell inner membrane. Part of a membrane-bound complex that couples electron transfer with translocation of ions across the membrane. This chain is Ion-translocating oxidoreductase complex subunit B, found in Shewanella loihica (strain ATCC BAA-1088 / PV-4).